Reading from the N-terminus, the 294-residue chain is Urease accessory protein UreD 1 (294 aa).

The disordered stretch occupies residues 1-22 (MALSLDGLPEKPAPAEAPSPPV). Residues 11–21 (KPAPAEAPSPP) are compositionally biased toward pro residues.

This sequence belongs to the UreD family. In terms of assembly, ureD, UreF and UreG form a complex that acts as a GTP-hydrolysis-dependent molecular chaperone, activating the urease apoprotein by helping to assemble the nickel containing metallocenter of UreC. The UreE protein probably delivers the nickel.

It is found in the cytoplasm. In terms of biological role, required for maturation of urease via the functional incorporation of the urease nickel metallocenter. The protein is Urease accessory protein UreD 1 of Methylorubrum extorquens (strain PA1) (Methylobacterium extorquens).